We begin with the raw amino-acid sequence, 166 residues long: Bacterial non-heme ferritin (166 aa).

Positions 2 to 145 constitute a Ferritin-like diiron domain; the sequence is LSKNLLEALN…THINYLTRIG (144 aa). 5 residues coordinate Fe cation: glutamate 17, glutamate 50, histidine 53, glutamate 94, and glutamine 127.

This sequence belongs to the ferritin family. Prokaryotic subfamily.

It localises to the cytoplasm. It carries out the reaction 4 Fe(2+) + O2 + 6 H2O = 4 iron(III) oxide-hydroxide + 12 H(+). Functionally, iron-storage protein. In Staphylococcus aureus (strain MRSA252), this protein is Bacterial non-heme ferritin (ftnA).